The following is a 279-amino-acid chain: Expansin-A22 (279 aa).

An N-terminal signal peptide occupies residues 1-27; that stretch reads MKLLEKMIYVEFLMIIMVIWVVPMSYG. An Expansin-like EG45 domain is found at 76–186; it reads QGACGYGNLF…RRIPCSKTGG (111 aa). The region spanning 196 to 275 is the Expansin-like CBD domain; it reads YFLMVLIYNV…NWGFGQTFDG (80 aa).

It belongs to the expansin family. Expansin A subfamily.

It is found in the secreted. Its subcellular location is the cell wall. The protein localises to the membrane. Its function is as follows. Causes loosening and extension of plant cell walls by disrupting non-covalent bonding between cellulose microfibrils and matrix glucans. No enzymatic activity has been found. The chain is Expansin-A22 (EXPA22) from Arabidopsis thaliana (Mouse-ear cress).